A 383-amino-acid chain; its full sequence is Acetylornithine deacetylase (383 aa).

His-80 provides a ligand contact to Zn(2+). Asp-82 is a catalytic residue. A Zn(2+)-binding site is contributed by Asp-112. Glu-144 is a catalytic residue. The Zn(2+) site is built by Glu-145, Glu-169, and His-355.

It belongs to the peptidase M20A family. ArgE subfamily. Homodimer. The cofactor is Zn(2+). It depends on Co(2+) as a cofactor. Glutathione serves as cofactor.

The protein localises to the cytoplasm. It carries out the reaction N(2)-acetyl-L-ornithine + H2O = L-ornithine + acetate. It functions in the pathway amino-acid biosynthesis; L-arginine biosynthesis; L-ornithine from N(2)-acetyl-L-ornithine (linear): step 1/1. Functionally, catalyzes the hydrolysis of the amide bond of N(2)-acetylated L-amino acids. Cleaves the acetyl group from N-acetyl-L-ornithine to form L-ornithine, an intermediate in L-arginine biosynthesis pathway, and a branchpoint in the synthesis of polyamines. In Escherichia coli O17:K52:H18 (strain UMN026 / ExPEC), this protein is Acetylornithine deacetylase.